We begin with the raw amino-acid sequence, 337 residues long: Anthranilate phosphoribosyltransferase (337 aa).

Residues Gly-78, 81–82, Thr-86, 88–91, 106–114, and Ser-118 each bind 5-phospho-alpha-D-ribose 1-diphosphate; these read GD, NIST, and KHGNRSVSS. Position 78 (Gly-78) interacts with anthranilate. Mg(2+) is bound at residue Ser-90. Asn-109 lines the anthranilate pocket. Arg-164 provides a ligand contact to anthranilate. Residues Asp-222 and Glu-223 each coordinate Mg(2+).

It belongs to the anthranilate phosphoribosyltransferase family. In terms of assembly, homodimer. The cofactor is Mg(2+).

The enzyme catalyses N-(5-phospho-beta-D-ribosyl)anthranilate + diphosphate = 5-phospho-alpha-D-ribose 1-diphosphate + anthranilate. Its pathway is amino-acid biosynthesis; L-tryptophan biosynthesis; L-tryptophan from chorismate: step 2/5. Catalyzes the transfer of the phosphoribosyl group of 5-phosphorylribose-1-pyrophosphate (PRPP) to anthranilate to yield N-(5'-phosphoribosyl)-anthranilate (PRA). This is Anthranilate phosphoribosyltransferase from Idiomarina loihiensis (strain ATCC BAA-735 / DSM 15497 / L2-TR).